The primary structure comprises 266 residues: 22 kDa alpha-zein 8 (266 aa).

The N-terminal stretch at 1–21 (MATKILALLALLALFVSATNA) is a signal peptide.

This sequence belongs to the zein family.

Zeins are major seed storage proteins. The polypeptide is 22 kDa alpha-zein 8 (Zea mays (Maize)).